A 27-amino-acid chain; its full sequence is Caerulein precursor fragment R7 (27 aa).

As to expression, expressed by the skin glands.

Its subcellular location is the secreted. Its function is as follows. Antimicrobial peptide. In Xenopus ruwenzoriensis (Uganda clawed frog), this protein is Caerulein precursor fragment R7.